The primary structure comprises 333 residues: Small ribosomal subunit protein uS2 (333 aa).

This sequence belongs to the universal ribosomal protein uS2 family.

The protein is Small ribosomal subunit protein uS2 of Azorhizobium caulinodans (strain ATCC 43989 / DSM 5975 / JCM 20966 / LMG 6465 / NBRC 14845 / NCIMB 13405 / ORS 571).